Reading from the N-terminus, the 245-residue chain is Lactate utilization protein A 1 (245 aa).

Belongs to the LutA/YkgE family.

Its function is as follows. Is involved in L-lactate degradation and allows cells to grow with lactate as the sole carbon source. This Bacillus mycoides (strain KBAB4) (Bacillus weihenstephanensis) protein is Lactate utilization protein A 1.